A 434-amino-acid polypeptide reads, in one-letter code: Chaperone SurA (434 aa).

The first 22 residues, 1–22 (MKHSKKIVTALLALAMSQTVMA), serve as a signal peptide directing secretion. PpiC domains are found at residues 173–274 (EVEF…KVMD) and 283–383 (VEEV…QLMD).

The protein resides in the periplasm. It carries out the reaction [protein]-peptidylproline (omega=180) = [protein]-peptidylproline (omega=0). In terms of biological role, chaperone involved in the correct folding and assembly of outer membrane proteins. Recognizes specific patterns of aromatic residues and the orientation of their side chains, which are found more frequently in integral outer membrane proteins. May act in both early periplasmic and late outer membrane-associated steps of protein maturation. In Shewanella denitrificans (strain OS217 / ATCC BAA-1090 / DSM 15013), this protein is Chaperone SurA.